We begin with the raw amino-acid sequence, 77 residues long: Translation initiation factor IF-1, chloroplastic (77 aa).

The region spanning 1 to 72 (MRKQNLIEME…TKGRITYRLR (72 aa)) is the S1-like domain.

The protein belongs to the IF-1 family. Component of the 30S ribosomal translation pre-initiation complex which assembles on the 30S ribosome in the order IF-2 and IF-3, IF-1 and N-formylmethionyl-tRNA(fMet); mRNA recruitment can occur at any time during PIC assembly.

It localises to the plastid. It is found in the chloroplast. One of the essential components for the initiation of protein synthesis. Stabilizes the binding of IF-2 and IF-3 on the 30S subunit to which N-formylmethionyl-tRNA(fMet) subsequently binds. Helps modulate mRNA selection, yielding the 30S pre-initiation complex (PIC). Upon addition of the 50S ribosomal subunit IF-1, IF-2 and IF-3 are released leaving the mature 70S translation initiation complex. The polypeptide is Translation initiation factor IF-1, chloroplastic (Staurastrum punctulatum (Green alga)).